A 426-amino-acid chain; its full sequence is Glutamate-1-semialdehyde 2,1-aminomutase (426 aa).

Lysine 263 carries the N6-(pyridoxal phosphate)lysine modification.

It belongs to the class-III pyridoxal-phosphate-dependent aminotransferase family. HemL subfamily. Homodimer. The cofactor is pyridoxal 5'-phosphate.

It localises to the cytoplasm. It carries out the reaction (S)-4-amino-5-oxopentanoate = 5-aminolevulinate. It participates in porphyrin-containing compound metabolism; protoporphyrin-IX biosynthesis; 5-aminolevulinate from L-glutamyl-tRNA(Glu): step 2/2. This is Glutamate-1-semialdehyde 2,1-aminomutase from Caldicellulosiruptor bescii (strain ATCC BAA-1888 / DSM 6725 / KCTC 15123 / Z-1320) (Anaerocellum thermophilum).